The sequence spans 164 residues: Anterior gradient protein 2 (164 aa).

The N-terminal stretch at 1–20 (METVLKTLFVLLVATSLTLA) is a signal peptide. 2 short sequence motifs (homodimer stabilization; interchain) span residues 34 to 43 (SRGWGDNLEW) and 49 to 56 (EGLYKAKT).

The protein belongs to the AGR family. As to quaternary structure, monomer and homodimer.

It is found in the secreted. The protein resides in the endoplasmic reticulum. This is Anterior gradient protein 2 from Xenopus tropicalis (Western clawed frog).